Consider the following 468-residue polypeptide: Nicotinamide phosphoribosyltransferase (468 aa).

Arg180 lines the diphosphate pocket. Asp203 contacts beta-nicotinamide D-ribonucleotide. Residues His229 and Arg293 each coordinate diphosphate. Position 229 is a phosphohistidine; by autocatalysis (His229). Residues Asp335 and Arg373 each contribute to the beta-nicotinamide D-ribonucleotide site.

The protein belongs to the NAPRTase family. As to quaternary structure, homodimer. The dimeric structure consists of two protomers arranged head to tail, with domain A on one protomer interacting with domain B on the other protomer. Phosphorylation at His-229 plays a crucial role in enhancing the substrate affinity and is important for maintaining enzymatic activity.

The enzyme catalyses beta-nicotinamide D-ribonucleotide + diphosphate = 5-phospho-alpha-D-ribose 1-diphosphate + nicotinamide + H(+). The protein operates within cofactor biosynthesis; NAD(+) biosynthesis; nicotinamide D-ribonucleotide from 5-phospho-alpha-D-ribose 1-diphosphate and nicotinamide: step 1/1. Its activity is regulated as follows. ATP-dependent autophosphorylation plays a vital role in nicotinamide binding and enzyme activation. Activity is inhibited by FK866. Functionally, catalyzes the condensation of nicotinamide with 5-phosphoribosyl-1-pyrophosphate to yield nicotinamide mononucleotide, an intermediate in the biosynthesis of NAD. Plays an important role in the biosynthesis of NAD via the nicotinamide (NAM) salvage pathway. Is also capable of hydrolyzing ATP and shows ATP-dependent autophosphorylation activity. The chain is Nicotinamide phosphoribosyltransferase from Xanthomonas campestris pv. campestris (strain 8004).